The sequence spans 352 residues: Nicotinate-nucleotide--dimethylbenzimidazole phosphoribosyltransferase (352 aa).

The Proton acceptor role is filled by Glu-318.

The protein belongs to the CobT family.

The enzyme catalyses 5,6-dimethylbenzimidazole + nicotinate beta-D-ribonucleotide = alpha-ribazole 5'-phosphate + nicotinate + H(+). It functions in the pathway nucleoside biosynthesis; alpha-ribazole biosynthesis; alpha-ribazole from 5,6-dimethylbenzimidazole: step 1/2. Catalyzes the synthesis of alpha-ribazole-5'-phosphate from nicotinate mononucleotide (NAMN) and 5,6-dimethylbenzimidazole (DMB). The protein is Nicotinate-nucleotide--dimethylbenzimidazole phosphoribosyltransferase of Geotalea uraniireducens (strain Rf4) (Geobacter uraniireducens).